The chain runs to 592 residues: Aspartate--tRNA(Asp/Asn) ligase (592 aa).

Glu176 is an L-aspartate binding site. The tract at residues 200–203 is aspartate; it reads QLYK. An L-aspartate-binding site is contributed by Arg222. ATP-binding positions include 222–224 and Gln231; that span reads RDE. His452 is a binding site for L-aspartate. Glu486 contacts ATP. Residue Arg493 participates in L-aspartate binding. Position 538 to 541 (538 to 541) interacts with ATP; that stretch reads GVDR.

Belongs to the class-II aminoacyl-tRNA synthetase family. Type 1 subfamily. Homodimer.

It localises to the cytoplasm. The catalysed reaction is tRNA(Asx) + L-aspartate + ATP = L-aspartyl-tRNA(Asx) + AMP + diphosphate. Its function is as follows. Aspartyl-tRNA synthetase with relaxed tRNA specificity since it is able to aspartylate not only its cognate tRNA(Asp) but also tRNA(Asn). Reaction proceeds in two steps: L-aspartate is first activated by ATP to form Asp-AMP and then transferred to the acceptor end of tRNA(Asp/Asn). The sequence is that of Aspartate--tRNA(Asp/Asn) ligase from Rhodopirellula baltica (strain DSM 10527 / NCIMB 13988 / SH1).